The chain runs to 133 residues: Nucleoside diphosphate kinase (133 aa).

ATP-binding residues include lysine 9, phenylalanine 57, arginine 85, threonine 91, arginine 102, and asparagine 112. Histidine 115 serves as the catalytic Pros-phosphohistidine intermediate.

Belongs to the NDK family. It depends on Mg(2+) as a cofactor.

It is found in the cytoplasm. The catalysed reaction is a 2'-deoxyribonucleoside 5'-diphosphate + ATP = a 2'-deoxyribonucleoside 5'-triphosphate + ADP. It carries out the reaction a ribonucleoside 5'-diphosphate + ATP = a ribonucleoside 5'-triphosphate + ADP. Functionally, major role in the synthesis of nucleoside triphosphates other than ATP. The ATP gamma phosphate is transferred to the NDP beta phosphate via a ping-pong mechanism, using a phosphorylated active-site intermediate. In Methanococcus maripaludis (strain DSM 14266 / JCM 13030 / NBRC 101832 / S2 / LL), this protein is Nucleoside diphosphate kinase.